We begin with the raw amino-acid sequence, 469 residues long: Probable periplasmic serine endoprotease DegP-like (469 aa).

The N-terminal stretch at 1 to 25 is a signal peptide; the sequence is MKVCQKYTAVLLVWLSAVVSMRAGA. Residues His-108, Asp-138, and Ser-211 each act as charge relay system in the active site. Substrate contacts are provided by residues 209-211 and 266-270; these read GNS and LGVLI. 2 consecutive PDZ domains span residues 255-346 and 352-457; these read LKDT…VRRG and AVEI…IRQG.

This sequence belongs to the peptidase S1C family.

It localises to the periplasm. The enzyme catalyses Acts on substrates that are at least partially unfolded. The cleavage site P1 residue is normally between a pair of hydrophobic residues, such as Val-|-Val.. Functionally, might be efficient in the degradation of transiently denatured and unfolded proteins which accumulate in the periplasm following stress conditions. This is Probable periplasmic serine endoprotease DegP-like (mucD) from Hahella chejuensis (strain KCTC 2396).